Consider the following 872-residue polypeptide: Alanine--tRNA ligase (872 aa).

The Zn(2+) site is built by His567, His571, Cys669, and His673.

The protein belongs to the class-II aminoacyl-tRNA synthetase family. The cofactor is Zn(2+).

The protein resides in the cytoplasm. The catalysed reaction is tRNA(Ala) + L-alanine + ATP = L-alanyl-tRNA(Ala) + AMP + diphosphate. Functionally, catalyzes the attachment of alanine to tRNA(Ala) in a two-step reaction: alanine is first activated by ATP to form Ala-AMP and then transferred to the acceptor end of tRNA(Ala). Also edits incorrectly charged Ser-tRNA(Ala) and Gly-tRNA(Ala) via its editing domain. This Streptococcus pneumoniae serotype 4 (strain ATCC BAA-334 / TIGR4) protein is Alanine--tRNA ligase.